The sequence spans 271 residues: Ribosomal RNA small subunit methyltransferase A (271 aa).

Positions 11, 13, 38, 58, 86, and 101 each coordinate S-adenosyl-L-methionine.

This sequence belongs to the class I-like SAM-binding methyltransferase superfamily. rRNA adenine N(6)-methyltransferase family. RsmA subfamily.

The protein resides in the cytoplasm. It catalyses the reaction adenosine(1518)/adenosine(1519) in 16S rRNA + 4 S-adenosyl-L-methionine = N(6)-dimethyladenosine(1518)/N(6)-dimethyladenosine(1519) in 16S rRNA + 4 S-adenosyl-L-homocysteine + 4 H(+). In terms of biological role, specifically dimethylates two adjacent adenosines (A1518 and A1519) in the loop of a conserved hairpin near the 3'-end of 16S rRNA in the 30S particle. May play a critical role in biogenesis of 30S subunits. This Helicobacter pylori (strain Shi470) protein is Ribosomal RNA small subunit methyltransferase A.